Here is a 132-residue protein sequence, read N- to C-terminus: Fluoride-specific ion channel FluC 2 (132 aa).

4 helical membrane passes run 12 to 32 (LTELLLVAVGAVPGALLRWQL), 41 to 61 (LLVNVLGAALLGLLAGRPVAP), 65 to 85 (LLVGIGFCGSLTTFSSWMLAA), and 96 to 116 (AALGLIGLTLGLGLGAAALGF). Na(+) contacts are provided by glycine 73 and threonine 76.

The protein belongs to the fluoride channel Fluc/FEX (TC 1.A.43) family.

The protein resides in the cell inner membrane. The enzyme catalyses fluoride(in) = fluoride(out). Its activity is regulated as follows. Na(+) is not transported, but it plays an essential structural role and its presence is essential for fluoride channel function. Fluoride-specific ion channel. Important for reducing fluoride concentration in the cell, thus reducing its toxicity. In Parasynechococcus marenigrum (strain WH8102), this protein is Fluoride-specific ion channel FluC 2.